We begin with the raw amino-acid sequence, 394 residues long: Elongation factor Tu 2 (394 aa).

The tr-type G domain occupies 10–204 (KPHVNVGTIG…ALDTYIPEPE (195 aa)). A G1 region spans residues 19–26 (GHVDHGKT). Residue 19–26 (GHVDHGKT) participates in GTP binding. Thr-26 contributes to the Mg(2+) binding site. A G2 region spans residues 60 to 64 (GITIS). The segment at 81–84 (DCPG) is G3. GTP contacts are provided by residues 81-85 (DCPGH) and 136-139 (NKCD). Positions 136 to 139 (NKCD) are G4. The segment at 174–176 (SAL) is G5.

Belongs to the TRAFAC class translation factor GTPase superfamily. Classic translation factor GTPase family. EF-Tu/EF-1A subfamily. Monomer.

It is found in the cytoplasm. It carries out the reaction GTP + H2O = GDP + phosphate + H(+). Its function is as follows. GTP hydrolase that promotes the GTP-dependent binding of aminoacyl-tRNA to the A-site of ribosomes during protein biosynthesis. In Vibrio vulnificus (strain CMCP6), this protein is Elongation factor Tu 2.